A 356-amino-acid chain; its full sequence is Peptide chain release factor 1 (356 aa).

Gln-234 bears the N5-methylglutamine mark.

Belongs to the prokaryotic/mitochondrial release factor family. Post-translationally, methylated by PrmC. Methylation increases the termination efficiency of RF1.

The protein resides in the cytoplasm. Functionally, peptide chain release factor 1 directs the termination of translation in response to the peptide chain termination codons UAG and UAA. The protein is Peptide chain release factor 1 of Parafrankia sp. (strain EAN1pec).